The sequence spans 266 residues: Small ribosomal subunit protein uS2 (266 aa).

The segment at 229-254 (RTSDKEADTTTEEVAQEEVTDTKADE) is disordered. Residues 237-247 (TTTEEVAQEEV) are compositionally biased toward acidic residues.

It belongs to the universal ribosomal protein uS2 family.

This Flavobacterium psychrophilum (strain ATCC 49511 / DSM 21280 / CIP 103535 / JIP02/86) protein is Small ribosomal subunit protein uS2.